Here is a 425-residue protein sequence, read N- to C-terminus: Serine--tRNA ligase (425 aa).

228-230 (TAE) contributes to the L-serine binding site. 259-261 (RSE) contacts ATP. L-serine is bound at residue Glu-282. 346–349 (EIAS) lines the ATP pocket. An L-serine-binding site is contributed by Ser-382.

It belongs to the class-II aminoacyl-tRNA synthetase family. Type-1 seryl-tRNA synthetase subfamily. In terms of assembly, homodimer. The tRNA molecule binds across the dimer.

The protein resides in the cytoplasm. The catalysed reaction is tRNA(Ser) + L-serine + ATP = L-seryl-tRNA(Ser) + AMP + diphosphate + H(+). It catalyses the reaction tRNA(Sec) + L-serine + ATP = L-seryl-tRNA(Sec) + AMP + diphosphate + H(+). It participates in aminoacyl-tRNA biosynthesis; selenocysteinyl-tRNA(Sec) biosynthesis; L-seryl-tRNA(Sec) from L-serine and tRNA(Sec): step 1/1. In terms of biological role, catalyzes the attachment of serine to tRNA(Ser). Is also able to aminoacylate tRNA(Sec) with serine, to form the misacylated tRNA L-seryl-tRNA(Sec), which will be further converted into selenocysteinyl-tRNA(Sec). In Rickettsia africae (strain ESF-5), this protein is Serine--tRNA ligase.